Here is a 107-residue protein sequence, read N- to C-terminus: Replication restart protein PriB (107 aa).

Residues 1–97 (MNTLELSARV…LHLQQARRIA (97 aa)) form the SSB domain.

This sequence belongs to the PriB family. Homodimer. Interacts with PriA and DnaT. Component of the replication restart primosome. Primosome assembly occurs via a 'hand-off' mechanism. PriA binds to replication forks, subsequently PriB then DnaT bind; DnaT then displaces ssDNA to generate the helicase loading substrate.

Involved in the restart of stalled replication forks, which reloads the replicative helicase on sites other than the origin of replication; the PriA-PriB pathway is the major replication restart pathway. During primosome assembly it facilitates complex formation between PriA and DnaT on DNA; stabilizes PriA on DNA. Stimulates the DNA unwinding activity of PriA helicase. The chain is Replication restart protein PriB from Bordetella parapertussis (strain 12822 / ATCC BAA-587 / NCTC 13253).